The sequence spans 334 residues: tRNA U34 carboxymethyltransferase (334 aa).

Carboxy-S-adenosyl-L-methionine-binding positions include Lys-91, Trp-105, Lys-110, Gly-130, 152-154, 181-182, Met-196, Tyr-200, and Arg-315; these read DPT and IE.

This sequence belongs to the class I-like SAM-binding methyltransferase superfamily. CmoB family. In terms of assembly, homotetramer.

It carries out the reaction carboxy-S-adenosyl-L-methionine + 5-hydroxyuridine(34) in tRNA = 5-carboxymethoxyuridine(34) in tRNA + S-adenosyl-L-homocysteine + H(+). In terms of biological role, catalyzes carboxymethyl transfer from carboxy-S-adenosyl-L-methionine (Cx-SAM) to 5-hydroxyuridine (ho5U) to form 5-carboxymethoxyuridine (cmo5U) at position 34 in tRNAs. This Klebsiella pneumoniae subsp. pneumoniae (strain ATCC 700721 / MGH 78578) protein is tRNA U34 carboxymethyltransferase.